Consider the following 487-residue polypeptide: Zinc finger and BTB domain-containing protein 32 (487 aa).

The region spanning 29–87 is the BTB domain; sequence CDTLITVGSQEFPAHSLVLAGVSQQLGRRGQWALGEGISPSTFAQLLNFVYGESVELQP. A compositionally biased stretch (basic and acidic residues) spans 112–166; the sequence is ARGDRAKKPDPGLKKHQEEPEKPSRNPERELGDPGEKQKPEQVSRTGGREQEMLH. Disordered stretches follow at residues 112–244 and 308–371; these read ARGD…TSVT and QNQL…ARSR. A compositionally biased stretch (polar residues) spans 308–320; that stretch reads QNQLASSSPTPGS. Over residues 357–369 the composition is skewed to pro residues; the sequence is PPRPHPPPAPPAR. C2H2-type zinc fingers lie at residues 373 to 395, 401 to 423, and 428 to 450; these read YACSVCGKRFSLKHQMETHYRVH, FSCSLCPQRSRDFSAMTKHLRTH, and YRCSLCGAGCPSLASMQAHMRGH. The segment at 468–487 is disordered; that stretch reads SSSRPSRPSTSPCCPSSSTT.

The protein belongs to the krueppel C2H2-type zinc-finger protein family. As to quaternary structure, homodimer (via PTB domain). Interacts with the N-terminal of FANCC. Interacts with ZBTB16. Interacts with GATA3. In terms of tissue distribution, predominantly expressed in testis. Some isoforms are ubiquitously expressed.

The protein localises to the nucleus. In terms of biological role, DNA-binding protein that binds to the to a 5'-TGTACAGTGT-3' core sequence. May function as a transcriptional transactivator and transcriptional repressor. Probably exerts its repressor effect by preventing GATA3 from binding to DNA. May play a role in regulating the differentiation and activation of helper T-cells. This is Zinc finger and BTB domain-containing protein 32 (ZBTB32) from Homo sapiens (Human).